A 980-amino-acid polypeptide reads, in one-letter code: Chitin binding domain containing chtb-2 (980 aa).

Positions 1–20 (MRTMHCFLFILLFCLGQVFT) are cleaved as a signal peptide. N-linked (GlcNAc...) asparagine glycosylation is found at Asn-187 and Asn-190. 3 disordered regions span residues 310–354 (ERQQ…AELD), 431–451 (QEEE…QIRQ), and 486–512 (EILR…QQEA). Residues Asn-941 and Asn-975 are each glycosylated (N-linked (GlcNAc...) asparagine).

In Caenorhabditis elegans, this protein is Chitin binding domain containing chtb-2.